The chain runs to 509 residues: Maturase K (509 aa).

This sequence belongs to the intron maturase 2 family. MatK subfamily.

It is found in the plastid. The protein resides in the chloroplast. Functionally, usually encoded in the trnK tRNA gene intron. Probably assists in splicing its own and other chloroplast group II introns. This Ibicella lutea (Yellow unicorn-plant) protein is Maturase K.